Consider the following 927-residue polypeptide: UPF0182 protein bll7333 (927 aa).

7 helical membrane-spanning segments follow: residues 17 to 37, 65 to 85, 134 to 154, 185 to 205, 220 to 240, 264 to 284, and 297 to 317; these read AVVGLIIAALVIAIVLTLLAL, AVVFLAVWTATAVILLLNGWL, LALLVAAAEAGNWGVFLQFVY, WMMLALALSALFAAAIYLVHG, VIAHGSALLGLLFAVKAWSFG, VGLPALWLMIGLSGIAALAAW, and AAFLLVAIGSFVLSGLVPVLF.

Belongs to the UPF0182 family.

The protein resides in the cell membrane. The chain is UPF0182 protein bll7333 from Bradyrhizobium diazoefficiens (strain JCM 10833 / BCRC 13528 / IAM 13628 / NBRC 14792 / USDA 110).